The sequence spans 279 residues: Acetyl-coenzyme A carboxylase carboxyl transferase subunit beta (279 aa).

A CoA carboxyltransferase N-terminal domain is found at 23 to 279 (LWWKCEECGA…LVTLFSMLKV (257 aa)). Cysteine 27, cysteine 30, cysteine 46, and cysteine 49 together coordinate Zn(2+). The segment at 27–49 (CEECGAMLHKKQFEDHFFTCAEC) adopts a C4-type zinc-finger fold.

The protein belongs to the AccD/PCCB family. Acetyl-CoA carboxylase is a heterohexamer composed of biotin carboxyl carrier protein (AccB), biotin carboxylase (AccC) and two subunits each of ACCase subunit alpha (AccA) and ACCase subunit beta (AccD). Zn(2+) is required as a cofactor.

The protein resides in the cytoplasm. The enzyme catalyses N(6)-carboxybiotinyl-L-lysyl-[protein] + acetyl-CoA = N(6)-biotinyl-L-lysyl-[protein] + malonyl-CoA. It participates in lipid metabolism; malonyl-CoA biosynthesis; malonyl-CoA from acetyl-CoA: step 1/1. Component of the acetyl coenzyme A carboxylase (ACC) complex. Biotin carboxylase (BC) catalyzes the carboxylation of biotin on its carrier protein (BCCP) and then the CO(2) group is transferred by the transcarboxylase to acetyl-CoA to form malonyl-CoA. The chain is Acetyl-coenzyme A carboxylase carboxyl transferase subunit beta from Pelodictyon phaeoclathratiforme (strain DSM 5477 / BU-1).